We begin with the raw amino-acid sequence, 551 residues long: Glucans biosynthesis protein D (551 aa).

A signal peptide (tat-type signal) is located at residues 1 to 32 (MDRRRFIKGSMAMAAVCGTSGIASLFSQAAFA).

This sequence belongs to the OpgD/OpgG family. Post-translationally, predicted to be exported by the Tat system. The position of the signal peptide cleavage has not been experimentally proven.

It is found in the periplasm. The protein operates within glycan metabolism; osmoregulated periplasmic glucan (OPG) biosynthesis. Probably involved in the control of the structural glucose backbone of osmoregulated periplasmic glucans (OPGs). This Escherichia coli O139:H28 (strain E24377A / ETEC) protein is Glucans biosynthesis protein D.